The chain runs to 389 residues: MGIKGLTALMRDNAPGAIKEQKFESYLDRRVAIDASMHIYQFMMVVGRQGEQQLTNEAGEVTSHLQGMLNRTCRMLEAGIKPIYVFDGKPPVMKGGELAKRKDKREEAEAALKAAREAGNQEEVEKLSKRTVRVSKQHSQEVMKLASLLGVPVFEAPCEAEASCAAMCKAGLVWAVATEDMDTLTFAAPRLARNLMAPKSQDKPVLEFDYDKVLAGLGLTPEQFIDMCILCGCDYCDTIRGIGPKTALKLIKEHGSIEKILEEIDTEKYPPPQDWDFAGARELFKNPEVMDTTGIALSWKAPNEEGLIDFLVKEKQFNEERVRAVCAKVKKARQGKASQNRLESFFGPPTIISSTIGKRKVEEKKGKNGKAGLANKKSKGVSGFRRSKN.

Residues 1 to 105 (MGIKGLTALM…GELAKRKDKR (105 aa)) form an N-domain region. Position 34 (aspartate 34) interacts with Mg(2+). Arginine 71 is a binding site for DNA. Residues aspartate 87, glutamate 159, glutamate 161, aspartate 180, and aspartate 182 each coordinate Mg(2+). An I-domain region spans residues 123 to 254 (EVEKLSKRTV…KTALKLIKEH (132 aa)). Position 159 (glutamate 159) interacts with DNA. DNA is bound by residues glycine 232 and aspartate 234. Aspartate 234 is a binding site for Mg(2+). Residues 338-346 (SQNRLESFF) are interaction with PCNA. Residues 356–389 (IGKRKVEEKKGKNGKAGLANKKSKGVSGFRRSKN) are disordered.

This sequence belongs to the XPG/RAD2 endonuclease family. FEN1 subfamily. In terms of assembly, interacts with PCNA. Three molecules of FEN1 bind to one PCNA trimer with each molecule binding to one PCNA monomer. PCNA stimulates the nuclease activity without altering cleavage specificity. Mg(2+) is required as a cofactor. Post-translationally, phosphorylated. Phosphorylation upon DNA damage induces relocalization to the nuclear plasma.

Its subcellular location is the nucleus. It localises to the nucleolus. The protein localises to the nucleoplasm. The protein resides in the mitochondrion. In terms of biological role, structure-specific nuclease with 5'-flap endonuclease and 5'-3' exonuclease activities involved in DNA replication and repair. During DNA replication, cleaves the 5'-overhanging flap structure that is generated by displacement synthesis when DNA polymerase encounters the 5'-end of a downstream Okazaki fragment. It enters the flap from the 5'-end and then tracks to cleave the flap base, leaving a nick for ligation. Also involved in the long patch base excision repair (LP-BER) pathway, by cleaving within the apurinic/apyrimidinic (AP) site-terminated flap. Acts as a genome stabilization factor that prevents flaps from equilibrating into structures that lead to duplications and deletions. Also possesses 5'-3' exonuclease activity on nicked or gapped double-stranded DNA, and exhibits RNase H activity. Also involved in replication and repair of rDNA and in repairing mitochondrial DNA. The protein is Flap endonuclease 1 of Ostreococcus lucimarinus (strain CCE9901).